We begin with the raw amino-acid sequence, 110 residues long: Large ribosomal subunit protein uL22 (110 aa).

This sequence belongs to the universal ribosomal protein uL22 family. In terms of assembly, part of the 50S ribosomal subunit.

In terms of biological role, this protein binds specifically to 23S rRNA; its binding is stimulated by other ribosomal proteins, e.g. L4, L17, and L20. It is important during the early stages of 50S assembly. It makes multiple contacts with different domains of the 23S rRNA in the assembled 50S subunit and ribosome. The globular domain of the protein is located near the polypeptide exit tunnel on the outside of the subunit, while an extended beta-hairpin is found that lines the wall of the exit tunnel in the center of the 70S ribosome. The sequence is that of Large ribosomal subunit protein uL22 from Vibrio cholerae serotype O1 (strain ATCC 39541 / Classical Ogawa 395 / O395).